Here is a 494-residue protein sequence, read N- to C-terminus: tRNA-2-methylthio-N(6)-dimethylallyladenosine synthase (494 aa).

Residues 5 to 121 form the MTTase N-terminal domain; it reads RTYQVRTYGC…LPALLERARV (117 aa). Positions 14, 50, 84, 158, 162, and 165 each coordinate [4Fe-4S] cluster. The Radical SAM core domain occupies 144–374; it reads RESVYAAWVA…LELQERISEE (231 aa). The 70-residue stretch at 377 to 446 folds into the TRAM domain; that stretch reads AKFVGREVEV…PHHLVADSGI (70 aa). Positions 458-468 are enriched in basic and acidic residues; that stretch reads WEARNAPERRP. The disordered stretch occupies residues 458 to 494; the sequence is WEARNAPERRPTGVLLGMPKVGAPEPQPSVVGGCCDS.

Belongs to the methylthiotransferase family. MiaB subfamily. Monomer. [4Fe-4S] cluster serves as cofactor.

It is found in the cytoplasm. The enzyme catalyses N(6)-dimethylallyladenosine(37) in tRNA + (sulfur carrier)-SH + AH2 + 2 S-adenosyl-L-methionine = 2-methylsulfanyl-N(6)-dimethylallyladenosine(37) in tRNA + (sulfur carrier)-H + 5'-deoxyadenosine + L-methionine + A + S-adenosyl-L-homocysteine + 2 H(+). In terms of biological role, catalyzes the methylthiolation of N6-(dimethylallyl)adenosine (i(6)A), leading to the formation of 2-methylthio-N6-(dimethylallyl)adenosine (ms(2)i(6)A) at position 37 in tRNAs that read codons beginning with uridine. This chain is tRNA-2-methylthio-N(6)-dimethylallyladenosine synthase, found in Thermobifida fusca (strain YX).